The sequence spans 475 residues: Alpha,alpha-trehalose-phosphate synthase [UDP-forming] (475 aa).

D-glucose 6-phosphate-binding residues include Y93 and D147. UDP contacts are provided by R285 and K290. Positions 285 and 290 each coordinate UDP-alpha-D-glucose. R323 provides a ligand contact to D-glucose 6-phosphate. 384–392 is a binding site for UDP-alpha-D-glucose; the sequence is DGMNLVSYE. 388–392 is a binding site for UDP; the sequence is LVSYE.

The protein belongs to the glycosyltransferase 20 family.

The catalysed reaction is D-glucose 6-phosphate + UDP-alpha-D-glucose = alpha,alpha-trehalose 6-phosphate + UDP + H(+). The protein operates within carbohydrate biosynthesis. Its function is as follows. Synthase catalytic subunit of the trehalose synthase complex that catalyzes the production of trehalose from glucose-6-phosphate and UDP-alpha-D-glucose in a two step process. The sequence is that of Alpha,alpha-trehalose-phosphate synthase [UDP-forming] from Pichia angusta (Yeast).